The chain runs to 264 residues: Teichoic acids export ATP-binding protein TagH (264 aa).

The ABC transporter domain occupies 24-243 (IKDALIPKNK…YEAFLKTFKK (220 aa)). Residue 57–64 (GINGSGKS) participates in ATP binding.

It belongs to the ABC transporter superfamily. Teichoic acids exporter (TC 3.A.1.104.1) family. As to quaternary structure, the complex is composed of two ATP-binding proteins (TagH) and two transmembrane proteins (TagG).

It is found in the cell membrane. It catalyses the reaction ATP + H2O + teichoic acidSide 1 = ADP + phosphate + teichoic acidSide 2.. Its function is as follows. Part of the ABC transporter complex TagGH involved in teichoic acids export. Responsible for energy coupling to the transport system. The chain is Teichoic acids export ATP-binding protein TagH from Staphylococcus epidermidis (strain ATCC 35984 / DSM 28319 / BCRC 17069 / CCUG 31568 / BM 3577 / RP62A).